The primary structure comprises 907 residues: Clumping factor B (907 aa).

Positions 1–44 (MKKRIDYLSNKQNKYSIRRFTVGTTSVIVGATILFGIGNHQAQA) are cleaved as a signal peptide. The YSIRK-G/S signaling motif signature appears at 15 to 26 (YSIRRFTVGTTS). Polar residues-rich tracts occupy residues 44-61 (ASEQ…NASA) and 68-101 (MIET…KPMS). Positions 44-191 (ASEQSNDTTQ…AQGTSKPSVR (148 aa)) are disordered. The interval 45–542 (SEQSNDTTQS…GSADGDSAVN (498 aa)) is ligand binding A region. Low complexity predominate over residues 102-119 (TQTSNTTTTEPASTNETP). Residues 134-189 (QDQTVPQEANSQVDNKTTNDANSIATNSELKNPQTLDLPQSSPQTISNAQGTSKPS) show a composition bias toward polar residues. The MIDAS-like motif motif lies at 272 to 276 (DYSNS). Residues 530–879 (YGGGSADGDS…ETGDKSENTN (350 aa)) are disordered. Positions 545–555 (DPTPGPPVDPE) are enriched in pro residues. The span at 556 to 831 (PSPDPEPEPS…SDSDSDSDSD (276 aa)) shows a compositional bias: acidic residues. Residues 835–846 (RVTPPNNEQKAP) show a composition bias toward polar residues. The segment covering 863–876 (HKTDALPETGDKSE) has biased composition (basic and acidic residues). Residues 868-872 (LPETG) carry the LPXTG sorting signal motif. At T871 the chain carries Pentaglycyl murein peptidoglycan amidated threonine. Positions 872-907 (GDKSENTNATLFGAMMALLGSLLLFRKRKQDHKEKA) are cleaved as a propeptide — removed by sortase.

Belongs to the serine-aspartate repeat-containing protein (SDr) family. In terms of processing, proteolytically cleaved by aureolysin (aur). This cleavage leads to the inactivation of ClfB.

Its subcellular location is the secreted. The protein localises to the cell wall. Cell surface-associated protein implicated in virulence by promoting bacterial attachment to both alpha- and beta-chains of human fibrinogen and inducing the formation of bacterial clumps. This is Clumping factor B (clfB) from Staphylococcus aureus (strain MW2).